A 457-amino-acid polypeptide reads, in one-letter code: Argininosuccinate lyase (457 aa).

Belongs to the lyase 1 family. Argininosuccinate lyase subfamily.

The protein localises to the cytoplasm. The enzyme catalyses 2-(N(omega)-L-arginino)succinate = fumarate + L-arginine. Its pathway is amino-acid biosynthesis; L-arginine biosynthesis; L-arginine from L-ornithine and carbamoyl phosphate: step 3/3. In Sodalis glossinidius (strain morsitans), this protein is Argininosuccinate lyase.